Consider the following 312-residue polypeptide: Telomere-binding protein OPG077 (312 aa).

Belongs to the orthopoxvirus OPG077 family.

The protein localises to the virion. Functionally, DNA-binding protein which binds to the hairpin form of the viral telomeric sequence. Required for the production of mature virions (MV). The chain is Telomere-binding protein OPG077 (OPG077) from Rabbitpox virus (strain Utrecht) (RPV).